Reading from the N-terminus, the 660-residue chain is Methionine--tRNA ligase (660 aa).

The 'HIGH' region motif lies at 11-21 (PYANGPCHLGH). Zn(2+) is bound by residues Cys143, Cys146, Cys155, and Cys158. The short motif at 325–329 (KMSTS) is the 'KMSKS' region element. Thr328 contacts ATP. A tRNA-binding domain is found at 563 to 660 (DFDKVVIKIG…DECEVGERIQ (98 aa)).

It belongs to the class-I aminoacyl-tRNA synthetase family. MetG type 1 subfamily. Homodimer. Zn(2+) is required as a cofactor.

It is found in the cytoplasm. The enzyme catalyses tRNA(Met) + L-methionine + ATP = L-methionyl-tRNA(Met) + AMP + diphosphate. Functionally, is required not only for elongation of protein synthesis but also for the initiation of all mRNA translation through initiator tRNA(fMet) aminoacylation. This chain is Methionine--tRNA ligase, found in Methanobrevibacter smithii (strain ATCC 35061 / DSM 861 / OCM 144 / PS).